A 112-amino-acid polypeptide reads, in one-letter code: uncharacterized protein (112 aa).

To U.parvum UU089.1.

This is an uncharacterized protein from Synechocystis sp. (strain ATCC 27184 / PCC 6803 / Kazusa).